Here is a 302-residue protein sequence, read N- to C-terminus: 4-hydroxy-tetrahydrodipicolinate synthase (302 aa).

T56 contacts pyruvate. Y145 functions as the Proton donor/acceptor in the catalytic mechanism. K173 serves as the catalytic Schiff-base intermediate with substrate. A pyruvate-binding site is contributed by V215.

It belongs to the DapA family. Homotetramer; dimer of dimers.

It localises to the cytoplasm. It catalyses the reaction L-aspartate 4-semialdehyde + pyruvate = (2S,4S)-4-hydroxy-2,3,4,5-tetrahydrodipicolinate + H2O + H(+). It functions in the pathway amino-acid biosynthesis; L-lysine biosynthesis via DAP pathway; (S)-tetrahydrodipicolinate from L-aspartate: step 3/4. Functionally, catalyzes the condensation of (S)-aspartate-beta-semialdehyde [(S)-ASA] and pyruvate to 4-hydroxy-tetrahydrodipicolinate (HTPA). The polypeptide is 4-hydroxy-tetrahydrodipicolinate synthase (Prochlorococcus marinus (strain MIT 9515)).